We begin with the raw amino-acid sequence, 506 residues long: Abscisic acid 8'-hydroxylase 2 (506 aa).

A helical transmembrane segment spans residues Phe3–Leu23. Residue Cys437 participates in heme binding.

It belongs to the cytochrome P450 family. Heme serves as cofactor. In terms of tissue distribution, in internodes and expanding leaves. Weak expression in seedlings.

Its subcellular location is the membrane. The enzyme catalyses 2-cis-(+)-abscisate + reduced [NADPH--hemoprotein reductase] + O2 = (+)-8'-hydroxyabscisate + oxidized [NADPH--hemoprotein reductase] + H2O + H(+). Its pathway is plant hormone degradation; abscisic acid degradation. Its function is as follows. Involved in the oxidative degradation of abscisic acid. This Oryza sativa subsp. indica (Rice) protein is Abscisic acid 8'-hydroxylase 2 (CYP707A6).